Consider the following 267-residue polypeptide: Regulatory protein VirG (267 aa).

The Response regulatory domain occupies 29–143; sequence HVLLVDDDVA…EFLARIRVAL (115 aa). The residue at position 78 (Asp-78) is a 4-aspartylphosphate. A DNA-binding region (ompR/PhoB-type) is located at residues 155-255; it reads RRSFCFTDWT…ARGAGYFFDA (101 aa).

Post-translationally, phosphorylated by wide host range (WHR) VirA protein.

The protein localises to the cytoplasm. In terms of biological role, virG is required for the positive regulation of at least two vir loci encoded by the Ti plasmid of A.tumefaciens. The sequence is that of Regulatory protein VirG (virG) from Agrobacterium tumefaciens (strain 15955).